The sequence spans 404 residues: uncharacterized protein (404 aa).

11 consecutive transmembrane segments (helical) span residues 9 to 29 (IYLI…PYLS), 36 to 56 (GFGE…FIGL), 76 to 96 (LVVK…LLFC), 103 to 123 (IMFY…QLSI), 135 to 155 (FIQV…LEFY), 162 to 182 (KRIL…YLIY), 199 to 219 (AFFY…SFFI), 236 to 256 (LGLY…ILAI), 288 to 308 (IVPI…LFFL), 319 to 339 (IIVF…VNYL), and 366 to 386 (LIFT…LGIL).

This sequence belongs to the polysaccharide synthase family. HI_0867/HI_1700 subfamily.

It is found in the cell membrane. This is an uncharacterized protein from Haemophilus influenzae (strain ATCC 51907 / DSM 11121 / KW20 / Rd).